A 247-amino-acid polypeptide reads, in one-letter code: Cell division protein ZapD (247 aa).

It belongs to the ZapD family. Interacts with FtsZ.

Its subcellular location is the cytoplasm. Cell division factor that enhances FtsZ-ring assembly. Directly interacts with FtsZ and promotes bundling of FtsZ protofilaments, with a reduction in FtsZ GTPase activity. The polypeptide is Cell division protein ZapD (Escherichia coli O157:H7).